Reading from the N-terminus, the 494-residue chain is Hydroxyneurosporene desaturase (494 aa).

It belongs to the carotenoid/retinoid oxidoreductase family.

The catalysed reaction is rhodopin + A = (3E)-3,4-didehydrorhodopin + AH2. It functions in the pathway carotenoid biosynthesis; spheroidene biosynthesis. Its function is as follows. Catalyzes the introduction of C-3,4 double bonds into 1-hydroxyneurosporene (1-HO-Neu) to yield demethylspheroidene (DMS). This is Hydroxyneurosporene desaturase (crtD) from Rhodobacter capsulatus (strain ATCC BAA-309 / NBRC 16581 / SB1003).